We begin with the raw amino-acid sequence, 101 residues long: Phosphoribosyl-AMP cyclohydrolase (101 aa).

Position 71 (Asp71) interacts with Mg(2+). Cys72 is a binding site for Zn(2+). Positions 73 and 75 each coordinate Mg(2+). Zn(2+) contacts are provided by Cys88 and Cys95.

Belongs to the PRA-CH family. As to quaternary structure, homodimer. Mg(2+) serves as cofactor. Zn(2+) is required as a cofactor.

It localises to the cytoplasm. The catalysed reaction is 1-(5-phospho-beta-D-ribosyl)-5'-AMP + H2O = 1-(5-phospho-beta-D-ribosyl)-5-[(5-phospho-beta-D-ribosylamino)methylideneamino]imidazole-4-carboxamide. It participates in amino-acid biosynthesis; L-histidine biosynthesis; L-histidine from 5-phospho-alpha-D-ribose 1-diphosphate: step 3/9. Catalyzes the hydrolysis of the adenine ring of phosphoribosyl-AMP. The chain is Phosphoribosyl-AMP cyclohydrolase from Bacillus cereus (strain ZK / E33L).